Consider the following 747-residue polypeptide: ESX-1 secretion system protein EccCa1 (747 aa).

3 helical membrane passes run 41 to 61, 65 to 85, and 222 to 242; these read ILPY…VAGG, LSPY…GGLA, and FPTI…TAMI. The FtsK domain maps to 456–665; the sequence is GNVMYLDIKE…LRTTSSHESK (210 aa). ATP is bound at residue 479–486; that stretch reads GTTGSGKS.

As to quaternary structure, part of the ESX-1 / type VII secretion system (T7SS), which is composed of cytosolic and membrane components. The ESX-1 membrane complex is composed of EccB1, EccCa1, EccCb1, EccD1 and EccE1.

It is found in the cell inner membrane. Its function is as follows. Part of the ESX-1 specialized secretion system, which delivers several virulence factors to host cells during infection, including the key virulence factors EsxA (ESAT-6) and EsxB (CFP-10). This Mycobacterium tuberculosis (strain CDC 1551 / Oshkosh) protein is ESX-1 secretion system protein EccCa1.